Consider the following 887-residue polypeptide: Valine--tRNA ligase (887 aa).

Residues 48–58 carry the 'HIGH' region motif; that stretch reads PNVTGVLHVGH. Residues 527 to 531 carry the 'KMSKS' region motif; that stretch reads KMSKS. ATP is bound at residue K530. Residues 814-887 are a coiled coil; it reads LAGLVDIEAE…EASDRLKKLS (74 aa).

Belongs to the class-I aminoacyl-tRNA synthetase family. ValS type 1 subfamily. Monomer.

Its subcellular location is the cytoplasm. It carries out the reaction tRNA(Val) + L-valine + ATP = L-valyl-tRNA(Val) + AMP + diphosphate. In terms of biological role, catalyzes the attachment of valine to tRNA(Val). As ValRS can inadvertently accommodate and process structurally similar amino acids such as threonine, to avoid such errors, it has a 'posttransfer' editing activity that hydrolyzes mischarged Thr-tRNA(Val) in a tRNA-dependent manner. The protein is Valine--tRNA ligase of Desulfotalea psychrophila (strain LSv54 / DSM 12343).